The primary structure comprises 289 residues: Glycine--tRNA ligase alpha subunit (289 aa).

The protein belongs to the class-II aminoacyl-tRNA synthetase family. Tetramer of two alpha and two beta subunits.

It is found in the cytoplasm. It catalyses the reaction tRNA(Gly) + glycine + ATP = glycyl-tRNA(Gly) + AMP + diphosphate. The sequence is that of Glycine--tRNA ligase alpha subunit from Rickettsia akari (strain Hartford).